Here is a 591-residue protein sequence, read N- to C-terminus: Splicing factor U2af large subunit A (591 aa).

The disordered stretch occupies residues 1-215; sequence MAEHDAPPES…QSKRMSGFDQ (215 aa). A compositionally biased stretch (polar residues) spans 27 to 36; the sequence is SPQQDAQPLS. 2 stretches are compositionally biased toward basic and acidic residues: residues 37 to 79 and 157 to 191; these read SRDR…SRDR and RERS…DRDG. RRM domains lie at 272-355 and 392-470; these read RRVY…RPTD and DRIF…RANQ.

It belongs to the splicing factor SR family.

Its subcellular location is the nucleus. In terms of biological role, necessary for the splicing of pre-mRNA. The sequence is that of Splicing factor U2af large subunit A (U2AF65A) from Triticum aestivum (Wheat).